Here is a 312-residue protein sequence, read N- to C-terminus: Non-structural protein 12A (312 aa).

The segment covering 1-23 has biased composition (low complexity); that stretch reads MFKSGSGSLKRSGSISSVKSFSG. Disordered regions lie at residues 1-37, 63-97, and 114-162; these read MFKS…RGSV, VPEK…YNQN, and KGRG…TGDG. Positions 63-73 are enriched in basic and acidic residues; the sequence is VPEKTKSEGNL. A compositionally biased stretch (polar residues) spans 74–97; sequence KNKSSVITGNFESSGPTNAHYNQN. The segment covering 122–134 has biased composition (basic and acidic residues); that stretch reads DARHTATDSRLSQ.

Belongs to the phytoreovirus non-structural protein Pns12A family.

Its subcellular location is the host cytoplasm. Functionally, constituent of viral factories. This Rice dwarf virus (isolate Fujian) (RDV) protein is Non-structural protein 12A.